We begin with the raw amino-acid sequence, 379 residues long: 3-dehydroquinate synthase (379 aa).

NAD(+) contacts are provided by residues 67–72, 101–105, 125–126, Lys138, and Lys147; these read PGEKNK, GIVLD, and TT. Zn(2+) is bound by residues Glu180, His242, and His258.

Belongs to the sugar phosphate cyclases superfamily. Dehydroquinate synthase family. NAD(+) serves as cofactor. Requires Co(2+) as cofactor. Zn(2+) is required as a cofactor.

Its subcellular location is the cytoplasm. The enzyme catalyses 7-phospho-2-dehydro-3-deoxy-D-arabino-heptonate = 3-dehydroquinate + phosphate. It functions in the pathway metabolic intermediate biosynthesis; chorismate biosynthesis; chorismate from D-erythrose 4-phosphate and phosphoenolpyruvate: step 2/7. In terms of biological role, catalyzes the conversion of 3-deoxy-D-arabino-heptulosonate 7-phosphate (DAHP) to dehydroquinate (DHQ). This Chlamydia felis (strain Fe/C-56) (Chlamydophila felis) protein is 3-dehydroquinate synthase.